Here is a 927-residue protein sequence, read N- to C-terminus: SPX and EXS domain-containing protein 5 (927 aa).

The SPX domain maps to 1 to 460 (MKFGKYLESQ…GLSIGSQVMS (460 aa)). 4 disordered regions span residues 54 to 78 (KINS…SSSN), 204 to 239 (KKNK…QHLQ), 257 to 305 (PIKS…DQDP), and 326 to 355 (SDNC…GGNN). 2 stretches are compositionally biased toward low complexity: residues 60 to 78 (PSPT…SSSN) and 208 to 224 (LNNN…NNNN). Residues 257-270 (PIKSTPLSPKQQDG) show a composition bias toward polar residues. Residues 286–299 (LEEEEEEEEEEDDN) are compositionally biased toward acidic residues. A run of 8 helical transmembrane segments spans residues 516–536 (FFSG…YYFI), 553–573 (VYSA…DCWV), 597–617 (IFQA…VYMW), 636–656 (PLVL…IFQL), 682–702 (FFMG…AQFV), 769–789 (LSIV…DSGW), 845–862 (FVYY…TTWT), and 869–889 (QLTN…IEIL). Residues 717–927 (GCIRYARYFN…LPYQIRDNEN (211 aa)) enclose the EXS domain.

Belongs to the SYG1 (TC 2.A.94) family.

It is found in the membrane. In Dictyostelium discoideum (Social amoeba), this protein is SPX and EXS domain-containing protein 5.